Consider the following 127-residue polypeptide: Large ribosomal subunit protein bL17 (127 aa).

The protein belongs to the bacterial ribosomal protein bL17 family. As to quaternary structure, part of the 50S ribosomal subunit. Contacts protein L32.

The sequence is that of Large ribosomal subunit protein bL17 from Stenotrophomonas maltophilia (strain K279a).